We begin with the raw amino-acid sequence, 279 residues long: Tryptophan synthase alpha chain (279 aa).

Active-site proton acceptor residues include glutamate 50 and aspartate 61.

This sequence belongs to the TrpA family. Tetramer of two alpha and two beta chains.

The enzyme catalyses (1S,2R)-1-C-(indol-3-yl)glycerol 3-phosphate + L-serine = D-glyceraldehyde 3-phosphate + L-tryptophan + H2O. It participates in amino-acid biosynthesis; L-tryptophan biosynthesis; L-tryptophan from chorismate: step 5/5. In terms of biological role, the alpha subunit is responsible for the aldol cleavage of indoleglycerol phosphate to indole and glyceraldehyde 3-phosphate. The protein is Tryptophan synthase alpha chain of Rhizobium rhizogenes (strain K84 / ATCC BAA-868) (Agrobacterium radiobacter).